A 637-amino-acid polypeptide reads, in one-letter code: Threonine--tRNA ligase (637 aa).

The TGS domain maps to 1–61; that stretch reads MPNVKLPDGN…KEDCSLIIVT (61 aa). The interval 242-533 is catalytic; it reads DHRKLGKALD…LIEHYAGKLP (292 aa). Zn(2+) is bound by residues Cys333, His384, and His510.

This sequence belongs to the class-II aminoacyl-tRNA synthetase family. In terms of assembly, homodimer. It depends on Zn(2+) as a cofactor.

The protein localises to the cytoplasm. The catalysed reaction is tRNA(Thr) + L-threonine + ATP = L-threonyl-tRNA(Thr) + AMP + diphosphate + H(+). In terms of biological role, catalyzes the attachment of threonine to tRNA(Thr) in a two-step reaction: L-threonine is first activated by ATP to form Thr-AMP and then transferred to the acceptor end of tRNA(Thr). Also edits incorrectly charged L-seryl-tRNA(Thr). The chain is Threonine--tRNA ligase from Legionella pneumophila (strain Paris).